We begin with the raw amino-acid sequence, 148 residues long: Large ribosomal subunit protein bL9 (148 aa).

It belongs to the bacterial ribosomal protein bL9 family.

Its function is as follows. Binds to the 23S rRNA. This is Large ribosomal subunit protein bL9 from Bacillus cereus (strain ATCC 10987 / NRS 248).